The sequence spans 132 residues: MSMQDPIADMFTRIRNGLSAEKEFVSVPFSKIKMEIANFLVNEGYIKSCSKGTTSMGHPSIEVELKYHAGAPVIEMIKRVSRPSLRIYKSHADLPKVYGGYGVAIVSTSKGLVSDRKARDLGVGGEIIGYVA.

It belongs to the universal ribosomal protein uS8 family. Part of the 30S ribosomal subunit. Contacts proteins S5 and S12.

Its function is as follows. One of the primary rRNA binding proteins, it binds directly to 16S rRNA central domain where it helps coordinate assembly of the platform of the 30S subunit. The sequence is that of Small ribosomal subunit protein uS8 from Francisella tularensis subsp. tularensis (strain FSC 198).